We begin with the raw amino-acid sequence, 337 residues long: Ribosomal RNA small subunit methyltransferase H (337 aa).

S-adenosyl-L-methionine-binding positions include 35 to 37 (GGY), aspartate 54, phenylalanine 81, aspartate 102, and glutamine 109. The tract at residues 286 to 316 (PVGPSEAEAAANPRARSAKLRAGERTDAPAP) is disordered. The span at 289–300 (PSEAEAAANPRA) shows a compositional bias: low complexity.

This sequence belongs to the methyltransferase superfamily. RsmH family.

The protein localises to the cytoplasm. The catalysed reaction is cytidine(1402) in 16S rRNA + S-adenosyl-L-methionine = N(4)-methylcytidine(1402) in 16S rRNA + S-adenosyl-L-homocysteine + H(+). In terms of biological role, specifically methylates the N4 position of cytidine in position 1402 (C1402) of 16S rRNA. The chain is Ribosomal RNA small subunit methyltransferase H from Methylobacterium sp. (strain 4-46).